We begin with the raw amino-acid sequence, 185 residues long: Adenine phosphoribosyltransferase (185 aa).

It belongs to the purine/pyrimidine phosphoribosyltransferase family. Homodimer.

The protein localises to the cytoplasm. It catalyses the reaction AMP + diphosphate = 5-phospho-alpha-D-ribose 1-diphosphate + adenine. It functions in the pathway purine metabolism; AMP biosynthesis via salvage pathway; AMP from adenine: step 1/1. Functionally, catalyzes a salvage reaction resulting in the formation of AMP, that is energically less costly than de novo synthesis. The chain is Adenine phosphoribosyltransferase from Pectobacterium carotovorum subsp. carotovorum (strain PC1).